The following is a 395-amino-acid chain: Elongation factor Tu (395 aa).

The tr-type G domain occupies 10-205 (KVHMNVGTIG…TMDEYFKDPV (196 aa)). The tract at residues 19–26 (GHVDHGKT) is G1. 19 to 26 (GHVDHGKT) is a binding site for GTP. Threonine 26 contributes to the Mg(2+) binding site. The tract at residues 60–64 (GITIN) is G2. Residues 81 to 84 (DCPG) form a G3 region. GTP-binding positions include 81-85 (DCPGH) and 136-139 (NKVD). The G4 stretch occupies residues 136-139 (NKVD). Positions 173-175 (SAF) are G5.

This sequence belongs to the TRAFAC class translation factor GTPase superfamily. Classic translation factor GTPase family. EF-Tu/EF-1A subfamily. In terms of assembly, monomer.

The protein localises to the cytoplasm. It catalyses the reaction GTP + H2O = GDP + phosphate + H(+). GTP hydrolase that promotes the GTP-dependent binding of aminoacyl-tRNA to the A-site of ribosomes during protein biosynthesis. The sequence is that of Elongation factor Tu from Treponema denticola (strain ATCC 35405 / DSM 14222 / CIP 103919 / JCM 8153 / KCTC 15104).